The primary structure comprises 351 residues: Phosphoribosylformylglycinamidine cyclo-ligase (351 aa).

The protein belongs to the AIR synthase family.

The protein resides in the cytoplasm. It carries out the reaction 2-formamido-N(1)-(5-O-phospho-beta-D-ribosyl)acetamidine + ATP = 5-amino-1-(5-phospho-beta-D-ribosyl)imidazole + ADP + phosphate + H(+). Its pathway is purine metabolism; IMP biosynthesis via de novo pathway; 5-amino-1-(5-phospho-D-ribosyl)imidazole from N(2)-formyl-N(1)-(5-phospho-D-ribosyl)glycinamide: step 2/2. The protein is Phosphoribosylformylglycinamidine cyclo-ligase of Lysinibacillus sphaericus (strain C3-41).